Reading from the N-terminus, the 402-residue chain is Elongation factor Tu (402 aa).

Residues 10 to 212 (KPHINIGTIG…AVDEYIPEPK (203 aa)) form the tr-type G domain. A G1 region spans residues 19 to 26 (GHVDHGKT). 19 to 26 (GHVDHGKT) contributes to the GTP binding site. A Mg(2+)-binding site is contributed by threonine 26. Residues 60–64 (GITIA) are G2. The interval 81 to 84 (DCPG) is G3. Residues 81 to 85 (DCPGH) and 136 to 139 (NKED) contribute to the GTP site. The tract at residues 136–139 (NKED) is G4. Residues 177 to 179 (SAF) form a G5 region.

This sequence belongs to the TRAFAC class translation factor GTPase superfamily. Classic translation factor GTPase family. EF-Tu/EF-1A subfamily. As to quaternary structure, monomer.

The protein localises to the cytoplasm. It carries out the reaction GTP + H2O = GDP + phosphate + H(+). Functionally, GTP hydrolase that promotes the GTP-dependent binding of aminoacyl-tRNA to the A-site of ribosomes during protein biosynthesis. The sequence is that of Elongation factor Tu from Sulfurovum sp. (strain NBC37-1).